The following is a 106-amino-acid chain: Large ribosomal subunit protein uL24 (106 aa).

The protein belongs to the universal ribosomal protein uL24 family. In terms of assembly, part of the 50S ribosomal subunit.

Its function is as follows. One of two assembly initiator proteins, it binds directly to the 5'-end of the 23S rRNA, where it nucleates assembly of the 50S subunit. In terms of biological role, one of the proteins that surrounds the polypeptide exit tunnel on the outside of the subunit. This chain is Large ribosomal subunit protein uL24, found in Syntrophus aciditrophicus (strain SB).